A 99-amino-acid chain; its full sequence is C-C motif chemokine 8 (99 aa).

A signal peptide spans 1–23; sequence MKVSAGILCLLLVAATFGTQVLA. Pyrrolidone carboxylic acid is present on glutamine 24. 2 disulfide bridges follow: cysteine 34-cysteine 59 and cysteine 35-cysteine 75.

The protein belongs to the intercrine beta (chemokine CC) family. Monomer or homodimer; in equilibrium.

It is found in the secreted. Its function is as follows. Chemotactic factor that attracts monocytes. This protein can bind heparin. The polypeptide is C-C motif chemokine 8 (CCL8) (Bos taurus (Bovine)).